The chain runs to 504 residues: Plasma protease C1 inhibitor (504 aa).

The first 22 residues, 1 to 22 (MASKLTPLTLLLLLLAGDRAFS), serve as a signal peptide directing secretion. Residues 23 to 75 (DSEVTSHSSQDPLVVQEGSRDSVPERDGSRSPIEHTGQSSTWPTTSGSTKISN) are disordered. Positions 24 to 33 (SEVTSHSSQD) are enriched in polar residues. Basic and acidic residues predominate over residues 40–55 (GSRDSVPERDGSRSPI). The span at 58 to 75 (TGQSSTWPTTSGSTKISN) shows a compositional bias: polar residues. 5 N-linked (GlcNAc...) asparagine glycosylation sites follow: Asn75, Asn83, Asn107, Asn243, and Asn356. The interval 94–132 (AQLPEDSPSQSPVNSSSPPSTASAPPTQAPTEPLCPEPL) is disordered. Over residues 100-125 (SPSQSPVNSSSPPSTASAPPTQAPTE) the composition is skewed to low complexity.

It belongs to the serpin family. Interacts with MASP1.

It is found in the secreted. Functionally, serine protease inhibitor, which acrs as a regulator of the classical complement pathway. Forms a proteolytically inactive stoichiometric complex with the C1r or C1s proteases. May also regulate blood coagulation, fibrinolysis and the generation of kinins. Very efficient inhibitor of FXIIa. Inhibits chymotrypsin and kallikrein. The protein is Plasma protease C1 inhibitor (Serping1) of Rattus norvegicus (Rat).